Here is a 397-residue protein sequence, read N- to C-terminus: Enoyl-[acyl-carrier-protein] reductase [NADH] FabV (397 aa).

NAD(+) contacts are provided by residues 48 to 53 (GASTGY), 74 to 75 (FE), 111 to 112 (DA), and 139 to 140 (LA). Tyrosine 225 provides a ligand contact to substrate. The active-site Proton donor is the tyrosine 235. NAD(+) is bound by residues lysine 244 and 273 to 275 (VVT).

This sequence belongs to the TER reductase family. In terms of assembly, monomer.

It carries out the reaction a 2,3-saturated acyl-[ACP] + NAD(+) = a (2E)-enoyl-[ACP] + NADH + H(+). It functions in the pathway lipid metabolism; fatty acid biosynthesis. With respect to regulation, resistant to triclosan. Functionally, involved in the final reduction of the elongation cycle of fatty acid synthesis (FAS II). Catalyzes the NADH-dependent reduction of the carbon-carbon double bond in the enoyl moiety that is covalently linked to an acyl carrier protein (ACP). The sequence is that of Enoyl-[acyl-carrier-protein] reductase [NADH] FabV from Aeromonas salmonicida (strain A449).